Here is a 1258-residue protein sequence, read N- to C-terminus: Serine/threonine-protein kinase Nek1 (1258 aa).

Residues 4–258 (YVRLQKIGEG…VNSILEKGFI (255 aa)) enclose the Protein kinase domain. ATP is bound by residues 10–18 (IGEGSFGKA) and Lys-33. Residue Asp-128 is the Proton acceptor of the active site. The residue at position 156 (Thr-156) is a Phosphothreonine. A Phosphothreonine; by autocatalysis modification is found at Thr-162. The interval 330–360 (HEKKPLQKHKQAHQTPEKRVNTGEERRKISE) is disordered. Basic and acidic residues predominate over residues 344-360 (TPEKRVNTGEERRKISE). A phosphoserine mark is found at Ser-414, Ser-418, Ser-428, and Ser-438. Disordered regions lie at residues 578-600 (KLRG…EADM), 648-669 (KSSD…SKQQ), and 685-704 (VDSS…KTNN). The span at 579 to 591 (LRGEKKEANHSEG) shows a compositional bias: basic and acidic residues. Position 653 is a phosphoserine (Ser-653). Thr-661 carries the phosphothreonine modification. Ser-664 is modified (phosphoserine). A compositionally biased stretch (basic and acidic residues) spans 691-700 (DTRETSEEMQ). Ser-798, Ser-834, Ser-868, Ser-881, Ser-1052, and Ser-1126 each carry phosphoserine. The disordered stretch occupies residues 1118 to 1171 (REQPGEEYSEEEESVLKNSDVEPTANGTDVADEDDNPSSESALNEEWHSDNSDG).

Belongs to the protein kinase superfamily. NEK Ser/Thr protein kinase family. NIMA subfamily. Binds to CBY2. Found in a complex with CFAP410, NEK1 and SPATA7. Interacts with CFAP410. Interacts (via Ser-1052 phosphorylated form) with 14-3-3 proteins. It depends on Mg(2+) as a cofactor. In terms of tissue distribution, high fetal expression in the brain and kidney.

The protein localises to the nucleus. It localises to the cytoplasm. The protein resides in the cytoskeleton. It is found in the microtubule organizing center. Its subcellular location is the centrosome. It carries out the reaction L-seryl-[protein] + ATP = O-phospho-L-seryl-[protein] + ADP + H(+). The catalysed reaction is L-threonyl-[protein] + ATP = O-phospho-L-threonyl-[protein] + ADP + H(+). Functionally, phosphorylates serines and threonines, but also appears to possess tyrosine kinase activity. Involved in DNA damage checkpoint control and for proper DNA damage repair. In response to injury that includes DNA damage, NEK1 phosphorylates VDAC1 to limit mitochondrial cell death. May be implicated in the control of meiosis. Involved in cilium assembly. This Homo sapiens (Human) protein is Serine/threonine-protein kinase Nek1 (NEK1).